Consider the following 101-residue polypeptide: Cysteine-rich and transmembrane domain-containing protein B (101 aa).

The segment at 1-80 is disordered; sequence MSQQPPAVGV…PQQQQQQKHS (80 aa). Pro residues predominate over residues 24-43; it reads DAYPPPGQPYPQQGYPPPQG. Low complexity predominate over residues 59 to 77; the sequence is YPEQGYPQQGYPPQQQQQQ. The chain crosses the membrane as a helical span at residues 78–95; sequence KHSPGMLEGCIAALCCYC.

This sequence belongs to the CYSTM1 family.

The protein resides in the membrane. The protein is Cysteine-rich and transmembrane domain-containing protein B of Arabidopsis thaliana (Mouse-ear cress).